The chain runs to 638 residues: MNQPQIGTYNVGTQLTVGSHQVEIIKYLTSGGFAQVYSALINPPDPHSNSSVACLKRVIVPDKPSLNTLRAEVDAMRLLKNNRYVVSYIDSHAAKAMLHNGSYEVFVLMEYCERGGLIDFMNTRLQNRLHEFEILQIMSQVTQGVAAMHALQPPLIHRDIKIENVLISANNEYKLCDFGSVCGIIRPPRNSQELSYVQQDILKNTTAQYRSPEMIDTFRGLPIDEKSDIWALGIFLYKLCYYTTPFEKGGDLAILSGKFEFPLYPNYSEQLKGLIRDILVQDPRHRPNVYQLLKRISIMQNVPCPINDIQVVQAPSSHLNLTELHQLSATQNILSLNSPTTMENTMPNATFQISMADNTTTAQMHPNRKPSQIAYDASFSNSAKGSQPLFDKSQNMYHALDPPLVEPLASSVSNNDNELKANSATKLKQAIVSEAHTFRQNNSIDFPLQNIIPQYEDSSSSSDESYSGDVDELKKTRSLGSYSTRGNIKKNQSVKESLTSSSLPGTSFTPTSTKVNLKHENSPFKSTFVNTIDNSKDDLNKPSYEDLDVSKQNLKNSIQQRMIDKLNSSEESFNARKMSKVKLHEKGEIDKPTMLKSSGPISKDKKTKPTPPPKPSHLKPKPPPKPLLLAGRKLSLDK.

The Protein kinase domain maps to Val22 to Ile298. Residues Leu28–Val36 and Lys56 contribute to the ATP site. Residue Asp159 is the Proton acceptor of the active site. The residue at position 478 (Ser478) is a Phosphoserine. Residues Tyr482–Val515 are compositionally biased toward polar residues. The tract at residues Tyr482–Lys518 is disordered. Phosphoserine is present on residues Ser522 and Ser535. Residues Ser569–Lys638 form a disordered region. Residues Lys582–Thr593 are compositionally biased toward basic and acidic residues. The interaction with SH3 domain of ABP1 stretch occupies residues Ser602–Pro615.

Belongs to the protein kinase superfamily. Ser/Thr protein kinase family. As to quaternary structure, interacts with ABP1, which is required for proper actin patch localization.

It localises to the cytoplasm. It is found in the cytoskeleton. Its subcellular location is the actin patch. The catalysed reaction is L-seryl-[protein] + ATP = O-phospho-L-seryl-[protein] + ADP + H(+). It catalyses the reaction L-threonyl-[protein] + ATP = O-phospho-L-threonyl-[protein] + ADP + H(+). Involved in regulation of actin cytoskeleton organization and endocytosis. The protein is Actin-regulating kinase 1 (ARK1) of Saccharomyces cerevisiae (strain ATCC 204508 / S288c) (Baker's yeast).